A 565-amino-acid chain; its full sequence is Sulfite reductase [NADPH] hemoprotein beta-component (565 aa).

[4Fe-4S] cluster contacts are provided by Cys429, Cys435, Cys474, and Cys478. Residue Cys478 coordinates siroheme.

It belongs to the nitrite and sulfite reductase 4Fe-4S domain family. In terms of assembly, alpha(8)-beta(8). The alpha component is a flavoprotein, the beta component is a hemoprotein. Siroheme is required as a cofactor. The cofactor is [4Fe-4S] cluster.

The catalysed reaction is hydrogen sulfide + 3 NADP(+) + 3 H2O = sulfite + 3 NADPH + 4 H(+). It participates in sulfur metabolism; hydrogen sulfide biosynthesis; hydrogen sulfide from sulfite (NADPH route): step 1/1. Component of the sulfite reductase complex that catalyzes the 6-electron reduction of sulfite to sulfide. This is one of several activities required for the biosynthesis of L-cysteine from sulfate. The chain is Sulfite reductase [NADPH] hemoprotein beta-component from Shewanella baltica (strain OS155 / ATCC BAA-1091).